An 88-amino-acid chain; its full sequence is U2-ctenitoxin-Pn1a (88 aa).

A signal peptide spans 1–17; it reads MKVAILILSILVLAVAS. Residues 18–34 constitute a propeptide that is removed on maturation; sequence ETIEEYRDDFAVEELER. Intrachain disulfides connect Cys37–Cys51, Cys44–Cys57, Cys48–Cys86, Cys50–Cys71, and Cys59–Cys69. A propeptide is located at residue Lys88.

In terms of tissue distribution, expressed by the venom gland.

It localises to the secreted. Inhibits voltage-gated sodium channels (Nav). Causes scratching, lacrimation, hypersalivation, sweating and agitation followed by spastic paralysis of the anterior and posterior extremities and death at dose levels of 1.62 mg/mouse. Insecticidal to the larval and adult forms of the house fly. In Phoneutria nigriventer (Brazilian armed spider), this protein is U2-ctenitoxin-Pn1a.